A 364-amino-acid polypeptide reads, in one-letter code: MNIGVFIPIGNNGWLLSENAPQYMPSFELNKQITLKAEQHGLDFVLSMIKLRGFGGKTEFWDHNLESFTLMAGLAAVTSRIKLYATAPTLCLPPAIVARMASTIDSISNGRFGLNLVTGWQRPEYAQMGLWPGDEYFGRRYEYLSEYAQVLRELWETGRSDLKGEFFQMEDCRLSPRPQAEMKIICAGQSTAGMEFTATYADYNFCFGKGVNTPTAFAPTVERLEEAKAKTGRDVSSYVLFMVISDETDEAARAKWEHYKAGADAEAFAWLGLQGAADTKSGADTNIRQMADPTSAVNINMGTLVGSHATVAALLDEVVTVPGTGGVLLVFDDFLKGLDDFGTKIQPLMRSRRHVTGEMLAEVA.

FMN-binding positions include 49 to 50 (IK), Asn115, Glu124, 140 to 141 (RY), and Ser190.

The protein belongs to the NtaA/SnaA/DszA monooxygenase family. RutA subfamily.

It carries out the reaction uracil + FMNH2 + NADH + O2 = (Z)-3-ureidoacrylate + FMN + NAD(+) + H2O + H(+). The catalysed reaction is thymine + FMNH2 + NADH + O2 = (Z)-2-methylureidoacrylate + FMN + NAD(+) + H2O + H(+). Its function is as follows. Catalyzes the pyrimidine ring opening between N-3 and C-4 by an unusual flavin hydroperoxide-catalyzed mechanism, adding oxygen atoms in the process to yield ureidoacrylate peracid, that immediately reacts with FMN forming ureidoacrylate and FMN-N(5)-oxide. The FMN-N(5)-oxide reacts spontaneously with NADH to produce FMN. Requires the flavin reductase RutF to regenerate FMN in vivo. This is Pyrimidine monooxygenase RutA from Methylorubrum extorquens (strain ATCC 14718 / DSM 1338 / JCM 2805 / NCIMB 9133 / AM1) (Methylobacterium extorquens).